A 948-amino-acid chain; its full sequence is Puromycin-sensitive aminopeptidase (948 aa).

Substrate contacts are provided by residues E206 and 341–345; that span reads GAMEN. Position 377 (H377) interacts with Zn(2+). Residue E378 is the Proton acceptor of the active site. Zn(2+) contacts are provided by H381 and E400.

This sequence belongs to the peptidase M1 family. It depends on Zn(2+) as a cofactor. In terms of tissue distribution, expressed mainly in intestinal cells in the posterior part of the intestine and in amphid sensory neurons and nerve ring neurons. Expressed in neurons in the male tail. Expressed in mature spermatids (at protein level).

The protein localises to the cytoplasm. It localises to the cell cortex. The protein resides in the chromosome. Its subcellular location is the cytoskeleton. It is found in the spindle pole. It carries out the reaction Release of an N-terminal amino acid, preferentially alanine, from a wide range of peptides, amides and arylamides.. With respect to regulation, inhibited by chelating agent 1,10-phenanthroline, aminopeptidase inhibitors actinonin, amastatin, and leuhistin, and to a lesser extent by puromycin. Functionally, aminopeptidase. Required for the exit from meiosis, probably upstream of cyclin cyb-3. Involved in the establishment of the anterior-posterior polarity at the embryonic 1-cell stage by regulating the dynamics of sperm-donated centrosomes. Plays a role in oocyte maturation. Required for embryonic development. This is Puromycin-sensitive aminopeptidase from Caenorhabditis elegans.